A 596-amino-acid chain; its full sequence is Nuclear receptor subfamily 2 group C member 2 (596 aa).

Residue Ser-19 is modified to Phosphoserine; by MAPK. Residue Ser-46 is modified to Phosphoserine. Ser-55 and Ser-68 each carry phosphoserine; by MAPK. Ser-98 carries the post-translational modification Phosphoserine. The nuclear receptor DNA-binding region spans 114–189; the sequence is VEYCVVCGDK…MGMKMESVQS (76 aa). NR C4-type zinc fingers lie at residues 117-137 and 153-177; these read CVVCGDKASGRHYGAVSCEGC and CRSSQDCIINKHHRNRCQFCRLKKC. Lys-192 is covalently cross-linked (Glycyl lysine isopeptide (Lys-Gly) (interchain with G-Cter in SUMO2)). Ser-219 carries the post-translational modification Phosphoserine. Position 231 is an N6-acetyllysine (Lys-231). The NR LBD domain occupies 341 to 583; sequence GSIHVISRDQ…SIIPYILKME (243 aa).

It belongs to the nuclear hormone receptor family. NR2 subfamily. As to quaternary structure, homodimer; can bind DNA as homodimer. Heterodimer; binds DNA as a heterodimer with NR2C1 required for chromatin remodeling and for binding to promoter regions such as globin DR1 repeats. Interacts with NR2C2AP; the interaction represses selective NR2C2-mediated transcriptional activity. Interacts with PCAF; the interaction preferentially occurs on the non-phosphorylated form and induces NR2C2-mediated transactivation activity and does not require the ligand-binding domain. Interacts (MAPK-mediated phosphorylated form) with NRIP1; the interaction promotes repression of NR2C2-mediated activity. Interacts with NLRP10. Interacts (via ligand-binding region) with transcriptional corepressor JAZF1; the interaction promotes NR2C2-mediated transcriptional repression. Post-translationally, phosphorylation on Ser-19 and Ser-68 is an important regulator of NR2C2-mediated transcriptional activity. Phosphorylation on these residues recruits the corepressor, NRIP1, leading to transcripional repression, whereas the non-phosphorylated form preferentially recruits the coactivator, PCAF. Expressed, during embryogenesis, in perichondrium, developing glomeruli structures and tubules of kidney, as well as in intestiinal villi. Also expressed in lung and hair follicles.

Its subcellular location is the nucleus. Its function is as follows. Orphan nuclear receptor that can act as a repressor or activator of transcription. An important repressor of nuclear receptor signaling pathways such as retinoic acid receptor, retinoid X, vitamin D3 receptor, thyroid hormone receptor and estrogen receptor pathways. May regulate gene expression during the late phase of spermatogenesis. Activates transcriptional activity of LHCG and is antagonist of PPARA-mediated transactivation. Together with NR2C1, forms the core of the DRED (direct repeat erythroid-definitive) complex that represses embryonic and fetal globin transcription including that of GATA1. Binds to hormone response elements (HREs) consisting of two 5'-AGGTCA-3' half site direct repeat consensus sequences. Plays a fundamental role in early embryonic development and embryonic stem cells. Required for normal spermatogenesis and cerebellum development. Appears to be important for neurodevelopmentally regulated behavior. In Mus musculus (Mouse), this protein is Nuclear receptor subfamily 2 group C member 2 (Nr2c2).